The following is a 586-amino-acid chain: Asparagine synthetase [glutamine-hydrolyzing] 2 (586 aa).

Catalysis depends on Cys-2, which acts as the For GATase activity. The region spanning 2–185 (CGILAVLGCS…PGHLYSSKEK (184 aa)) is the Glutamine amidotransferase type-2 domain. Residues 50–54 (RLAIV), 75–77 (NGE), and Asp-98 each bind L-glutamine. Residues 193–516 (PPWFSEAIPS…PQNSARLSVP (324 aa)) enclose the Asparagine synthetase domain. ATP is bound by residues Leu-231, Val-267, and 341-342 (SG).

It carries out the reaction L-aspartate + L-glutamine + ATP + H2O = L-asparagine + L-glutamate + AMP + diphosphate + H(+). The protein operates within amino-acid biosynthesis; L-asparagine biosynthesis; L-asparagine from L-aspartate (L-Gln route): step 1/1. This is Asparagine synthetase [glutamine-hydrolyzing] 2 (AS2) from Lotus japonicus (Lotus corniculatus var. japonicus).